Here is a 78-residue protein sequence, read N- to C-terminus: MAFRENVLEILEEITETDEVVQNTNIKLFDEGLLDSMATVQLLIEIESRLDITVPVSEFDRDEWATPEMIITQLEALK.

The 78-residue stretch at 1–78 (MAFRENVLEI…MIITQLEALK (78 aa)) folds into the Carrier domain. The residue at position 36 (S36) is an O-(pantetheine 4'-phosphoryl)serine.

It belongs to the DltC family. 4'-phosphopantetheine is transferred from CoA to a specific serine of apo-DCP.

Its subcellular location is the cytoplasm. Its pathway is cell wall biogenesis; lipoteichoic acid biosynthesis. Carrier protein involved in the D-alanylation of lipoteichoic acid (LTA). The loading of thioester-linked D-alanine onto DltC is catalyzed by D-alanine--D-alanyl carrier protein ligase DltA. The DltC-carried D-alanyl group is further transferred to cell membrane phosphatidylglycerol (PG) by forming an ester bond, probably catalyzed by DltD. D-alanylation of LTA plays an important role in modulating the properties of the cell wall in Gram-positive bacteria, influencing the net charge of the cell wall. In Listeria innocua serovar 6a (strain ATCC BAA-680 / CLIP 11262), this protein is D-alanyl carrier protein.